The following is a 417-amino-acid chain: Cytoplasmic tRNA 2-thiolation protein 2 (417 aa).

Positions 1–11 (MCSIVEDDFGD) are enriched in acidic residues. Positions 1 to 24 (MCSIVEDDFGDEGGAHAMKEDTPQ) are disordered. Residues 13–22 (GGAHAMKEDT) are compositionally biased toward basic and acidic residues.

Belongs to the CTU2/NCS2 family.

Its subcellular location is the cytoplasm. It functions in the pathway tRNA modification; 5-methoxycarbonylmethyl-2-thiouridine-tRNA biosynthesis. In terms of biological role, plays a central role in 2-thiolation of mcm(5)S(2)U at tRNA wobble positions of tRNA(Lys), tRNA(Glu) and tRNA(Gln). May act by forming a heterodimer with NCS6/CTU1 that ligates sulfur from thiocarboxylated URM1 onto the uridine of tRNAs at wobble position. The sequence is that of Cytoplasmic tRNA 2-thiolation protein 2 from Anopheles gambiae (African malaria mosquito).